A 39-amino-acid polypeptide reads, in one-letter code: Photosystem I reaction center subunit IX (39 aa).

Residues 4–24 (FLTTAPVVAAIWFTLTAGILI) form a helical membrane-spanning segment.

The protein belongs to the PsaJ family.

It is found in the cellular thylakoid membrane. Its function is as follows. May help in the organization of the PsaE and PsaF subunits. In Synechococcus sp. (strain CC9311), this protein is Photosystem I reaction center subunit IX.